The sequence spans 338 residues: Methionine import ATP-binding protein MetN 2 (338 aa).

The ABC transporter domain maps to 2–242 (IEIEKVCVDF…PQHAFTQQLV (241 aa)). Residue 39–46 (GTSGAGKS) participates in ATP binding.

It belongs to the ABC transporter superfamily. Methionine importer (TC 3.A.1.24) family. As to quaternary structure, the complex is composed of two ATP-binding proteins (MetN), two transmembrane proteins (MetI) and a solute-binding protein (MetQ).

It localises to the cell inner membrane. It catalyses the reaction L-methionine(out) + ATP + H2O = L-methionine(in) + ADP + phosphate + H(+). The catalysed reaction is D-methionine(out) + ATP + H2O = D-methionine(in) + ADP + phosphate + H(+). Part of the ABC transporter complex MetNIQ involved in methionine import. Responsible for energy coupling to the transport system. The sequence is that of Methionine import ATP-binding protein MetN 2 from Salmonella typhimurium (strain LT2 / SGSC1412 / ATCC 700720).